The sequence spans 214 residues: uncharacterized protein (214 aa).

The N-terminal 49 residues, 1–49 (MATRGAVAAAASTIWKHRRNPSLRSLSRHFNPNFNHRIIPTGFKYQVRA), are a transit peptide targeting the chloroplast.

It is found in the plastid. The protein localises to the chloroplast. This is an uncharacterized protein from Arabidopsis thaliana (Mouse-ear cress).